Reading from the N-terminus, the 398-residue chain is Thyrotropin-releasing hormone receptor (398 aa).

Over 1 to 28 (MENETVSELNQTQLQPRAVVALEYQVVT) the chain is Extracellular. N-linked (GlcNAc...) asparagine glycosylation is found at N3 and N10. Residues 29-51 (ILLVLIICGLGIVGNIMVVLVVM) form a helical membrane-spanning segment. The Cytoplasmic segment spans residues 52–61 (RTKHMRTPTN). The helical transmembrane segment at 62–83 (CYLVSLAVADLMVLVAAGLPNI) threads the bilayer. Topologically, residues 84–99 (TDSIYGSWVYGYVGCL) are extracellular. An intrachain disulfide couples C98 to C179. A helical transmembrane segment spans residues 100 to 121 (CITYLQYLGINASSCSITAFTI). At 122–144 (ERYIAICHPIKAQFLCTFSRAKK) the chain is on the cytoplasmic side. The chain crosses the membrane as a helical span at residues 145 to 168 (IIIFVWAFTSLYCMLWFFLLDLNI). At 169-193 (STYKDAIVISCGYKISRNYYSPIYL) the chain is on the extracellular side. A helical membrane pass occupies residues 194 to 215 (MDFGVFYVVPMILATVLYGFIA). Residues 216–266 (RILFLNPIPSDPKENSKTWKNDSTHQNTNLNVNTSNRCFNSTVSSRKQVTK) lie on the Cytoplasmic side of the membrane. A helical transmembrane segment spans residues 267–288 (MLAVVVILFALLWMPYRTLVVV). The Extracellular segment spans residues 289–296 (NSFLSSPF). Residues 297–319 (QENWFLLFCRICIYLNSAINPVI) traverse the membrane as a helical segment. The Cytoplasmic portion of the chain corresponds to 320-398 (YNLMSQKFRA…LASEVSFSQS (79 aa)).

The protein belongs to the G-protein coupled receptor 1 family.

The protein resides in the cell membrane. Its function is as follows. Receptor for thyrotropin-releasing hormone (TRH). Upon ligand binding, this G-protein-coupled receptor triggers activation of the phosphatidylinositol (IP3)-calcium-protein kinase C (PKC) pathway. This chain is Thyrotropin-releasing hormone receptor (TRHR), found in Homo sapiens (Human).